Reading from the N-terminus, the 349-residue chain is Short-wave-sensitive opsin 1 (349 aa).

Residues 1–34 (MSKMPEEEEFYLFKNISSVGPWDGPQYHIAPVWA) lie on the Extracellular side of the membrane. The N-linked (GlcNAc...) asparagine glycan is linked to asparagine 15. The helical transmembrane segment at 35-59 (FQLQAAFMGIVFLAGLPLNSMVLVA) threads the bilayer. The Cytoplasmic portion of the chain corresponds to 60–71 (TVRYKKLRHPLN). A helical membrane pass occupies residues 72-97 (YVLVNVSVGGFLLCIFSVLPVFVNSC). Residues 98 to 111 (NGYFVFGRHVCALE) are Extracellular-facing. A disulfide bond links cysteine 108 and cysteine 185. The chain crosses the membrane as a helical span at residues 112 to 131 (GFLGTVAGLVTGWSLAFLAF). Residues 132-150 (ERYIVICKPFGNFRFSSKH) are Cytoplasmic-facing. Residues 151–174 (ALMVVLTTWTIGIGVSIPPFFGWS) traverse the membrane as a helical segment. The Extracellular portion of the chain corresponds to 175–200 (RYIAEGLQCSCGPDWYTVGTKYRSEY). A helical membrane pass occupies residues 201-228 (YTWFLFIFCFIVPLSLICFSYAQLLRAL). Residues 229–250 (KAVAAQQQESATTQKAEREVSR) lie on the Cytoplasmic side of the membrane. A helical membrane pass occupies residues 251–274 (MVVVMVGSFCVCYVPYAALAMYMV). Topologically, residues 275–282 (NNRNHGLD) are extracellular. A helical membrane pass occupies residues 283–307 (LRLVSIPAFFSKSSCIYNPIIYCFM). Lysine 294 carries the N6-(retinylidene)lysine modification. Residues 308-349 (NKQFRACIMEMVCGKAMTDESDISSSQKTEVSTVSSSQVGPN) lie on the Cytoplasmic side of the membrane.

This sequence belongs to the G-protein coupled receptor 1 family. Opsin subfamily. Post-translationally, phosphorylated on some or all of the serine and threonine residues present in the C-terminal region.

The protein localises to the cell membrane. It localises to the photoreceptor inner segment. Its subcellular location is the cell projection. It is found in the cilium. The protein resides in the photoreceptor outer segment. The protein localises to the cytoplasm. It localises to the perinuclear region. Its function is as follows. Visual pigments are the light-absorbing molecules that mediate vision. They consist of an apoprotein, opsin, covalently linked to cis-retinal. Required for the maintenance of cone outer segment organization in the ventral retina, but not essential for the maintenance of functioning cone photoreceptors. Involved in ensuring correct abundance and localization of retinal membrane proteins. May increase spectral sensitivity in dim light. The protein is Short-wave-sensitive opsin 1 (OPN1SW) of Saimiri boliviensis boliviensis (Bolivian squirrel monkey).